The sequence spans 246 residues: DNA polymerase sliding clamp (246 aa).

The protein belongs to the PCNA family. As to quaternary structure, homotrimer. The subunits circularize to form a toroid; DNA passes through its center. Replication factor C (RFC) is required to load the toroid on the DNA.

Functionally, sliding clamp subunit that acts as a moving platform for DNA processing. Responsible for tethering the catalytic subunit of DNA polymerase and other proteins to DNA during high-speed replication. The sequence is that of DNA polymerase sliding clamp from Methanocella arvoryzae (strain DSM 22066 / NBRC 105507 / MRE50).